Reading from the N-terminus, the 190-residue chain is MATHHTLWMGLALLGVLGDLQAAPEAQVSVQPNFQQDKFLGRWFSAGLASNSSWLREKKAALSMCKSVVAPATDGGLNLTSTFLRKNQCETRTMLLQPAGSLGSYSYRSPHWGSTYSVSVVETDYDQYALLYSQGSKGPGEDFRMATLYSRTQTPRAELKEKFTAFCKAQGFTEDTIVFLPQTDKCMTEQ.

An N-terminal signal peptide occupies residues 1–22 (MATHHTLWMGLALLGVLGDLQA). Serine 29 is a glycosylation site (O-linked (GalNAc...) serine). An N-linked (GlcNAc...) (complex) asparagine glycan is attached at asparagine 51. Cysteine 65 acts as the Nucleophile in catalysis. The N-linked (GlcNAc...) (complex) asparagine glycan is linked to asparagine 78. Cysteine 89 and cysteine 186 are disulfide-bonded.

Belongs to the calycin superfamily. Lipocalin family. Monomer. N- and O-glycosylated. Both N-glycosylation recognition sites are almost quantitatively occupied by N-glycans of the biantennary complex type, with a considerable proportion of structures bearing a bisecting GlcNAc. N-glycan at Asn-78: dHex1Hex5HexNAc4. Agalacto structure as well as sialylated and nonsialylated oligosaccharides bearing alpha2-3- and/or alpha2-6-linked NeuNAc are present. Abundant in the brain and CNS, where it is expressed in tissues of the blood-brain barrier and secreted into the cerebro-spinal fluid. Abundantly expressed in the heart. In the male reproductive system, it is expressed in the testis, epididymis and prostate, and is secreted into the seminal fluid. Expressed in the eye and secreted into the aqueous humor. Lower levels detected in various tissue fluids such as serum, normal urine, ascitic fluid and tear fluid. Also found in a number of other organs including ovary, fimbriae of the fallopian tubes, kidney, leukocytes.

The protein localises to the rough endoplasmic reticulum. It localises to the nucleus membrane. The protein resides in the golgi apparatus. It is found in the cytoplasm. Its subcellular location is the perinuclear region. The protein localises to the secreted. The catalysed reaction is prostaglandin H2 = prostaglandin D2. Catalyzes the conversion of PGH2 to PGD2, a prostaglandin involved in smooth muscle contraction/relaxation and a potent inhibitor of platelet aggregation. Involved in a variety of CNS functions, such as sedation, NREM sleep and PGE2-induced allodynia, and may have an anti-apoptotic role in oligodendrocytes. Binds small non-substrate lipophilic molecules, including biliverdin, bilirubin, retinal, retinoic acid and thyroid hormone, and may act as a scavenger for harmful hydrophobic molecules and as a secretory retinoid and thyroid hormone transporter. Possibly involved in development and maintenance of the blood-brain, blood-retina, blood-aqueous humor and blood-testis barrier. It is likely to play important roles in both maturation and maintenance of the central nervous system and male reproductive system. Involved in PLA2G3-dependent maturation of mast cells. PLA2G3 is secreted by immature mast cells and acts on nearby fibroblasts upstream to PTDGS to synthesize PGD2, which in turn promotes mast cell maturation and degranulation via PTGDR. The chain is Prostaglandin-H2 D-isomerase (PTGDS) from Homo sapiens (Human).